Consider the following 884-residue polypeptide: Alanine--tRNA ligase (884 aa).

4 residues coordinate Zn(2+): histidine 565, histidine 569, cysteine 675, and histidine 679.

Belongs to the class-II aminoacyl-tRNA synthetase family. The cofactor is Zn(2+).

The protein resides in the cytoplasm. It carries out the reaction tRNA(Ala) + L-alanine + ATP = L-alanyl-tRNA(Ala) + AMP + diphosphate. Its function is as follows. Catalyzes the attachment of alanine to tRNA(Ala) in a two-step reaction: alanine is first activated by ATP to form Ala-AMP and then transferred to the acceptor end of tRNA(Ala). Also edits incorrectly charged Ser-tRNA(Ala) and Gly-tRNA(Ala) via its editing domain. This is Alanine--tRNA ligase from Maricaulis maris (strain MCS10) (Caulobacter maris).